Consider the following 370-residue polypeptide: MYIQSLALTSYRNYEHTELQFDNKVNVMIGENAQGKTNLMEAIYVLSMAKSHRTSNDKELIRWDQDYAKIEGRVIKKNGPLPMQLVISKKGKKGKVNHIEQQKLSHYVGALNTIMFAPEDLSLVKGSPQIRRRFLDMEIGQVSAVYLHDLSLYQKILSQRNHYLKQLQTRKQTDQAMLEVLTEQLIDAAAKVVKRRLTFTKQLEKWAQPLHFGISRELETLTLQYHTAIEVSEASDLSKIKNSYEESFQKLRDREIDRGVTLWGPHRDDLLFFVNGRDVQTYGSQGQQRTTALSLKLAEIDLIHEEIGEYPILLLDDVLSELDDYRQSHLLHTIQGRVQTFVTTTSVEGIDHATLKEAEIFRVASGKVID.

30 to 37 (GENAQGKT) serves as a coordination point for ATP.

This sequence belongs to the RecF family.

It localises to the cytoplasm. The RecF protein is involved in DNA metabolism; it is required for DNA replication and normal SOS inducibility. RecF binds preferentially to single-stranded, linear DNA. It also seems to bind ATP. The protein is DNA replication and repair protein RecF of Bacillus pumilus (strain SAFR-032).